The primary structure comprises 1499 residues: MPRKQRVVTTPSPPTSDEDEDMDFGSTSQQQQQQPTRNNDGLSGFKSITEIIAEADNNIPSEQIDKDIDSFSSYSDISDWRGIPKFFPSLSSLSRRASTYENWENRFKVVDYLVSCSGALKDSVSDYVADYFEKNESGEDHSVDVELVHAVSMFVILTQRLTVQLQLYVSKSIASANQQAKRGTGRGGRQVDLDDDIVKWKDIQRHRMINCLLELLELRVDTVAGTKKKAIQYVFAPDVMEKDFLLRFLDTVVQLLEDPENMARSSQQWISHYFRILKVLSADYGMTKDVANCLFTALSHSYLEAANTFPFIEPLVTLMKENGEGSGRIYQPLRNVLQLVICRVGNLYAGERAEKPPPKAFCMMVQSLAINVHDLMLQDITHVYRLLQNQHVNVRMSTLHALADMFSSSYLSQSLCDTFASRRLKREGIFKRLLAHTNDEATNVRSKAVSLLRNIMENRRIPEEFESCGLLSIVGSRLNDKSVQVRKSAIQFLTTFLDNNRHGHDFNREMHQLKLNAKCSELRNAEEPQSKAIQGAENAFRQNLFTLTAGVRVEVYDIFRRRYRVEPERSITDILTGLFSPGSGNRLVRYYVAQENFPFRDRIPSLRERRSDDMEDDDDDTVSLEDDDMTSLVSEVVKWVVAQAEEDYVTFKVQLTQMDDDQLLENEQEARDRNNQIMQLRAQVQQLINKMSIEQELSRCVTIALRCVLNGETAEIKEGIRFLTRCKLFEITGADDAIRSMCSLVWRPSADILNELIEAAEDMFISRLDGNEKASERDSSTVENLMKAMNGVTEKDRPSVEEVIYLLAATELVHVDSDKNKVPRKRRPIEANVINKLWMIALDMSHGINSRKIDALRILYPISRSERGIAEARSRLRVVQKKLMDPELAVDALRIISILGTPTKLENEQDAYSRPLFKIHQDDSLWKSIEKLFFYEIMKADDNPDRDWFGVIRLTITTILSLSMDVNVMLPKLASHFVYRTKRISDFFLFYCDQVDDATDDTRKKMAQRRREYWALTYCRVMEKLMAFIGEVAVQLNAYIQVTIPKLHTRYVSKMVDAEKNDANIREEPVRFLSDLEKSVAQRKTIFTVPQDTTPGATSNDLHHLVSVMCDKRLFVPNKLMGRLLPIVVYGMRCKIMPTRIRHAATVAYGKMMPLSAEISAFAAPSFFSAMTKSSSILLRCNLVAACCDFAFAQPTLFELFAQSLFRMSQDESPLARESTILVLSHLMSNDMIQTRGVLSEAARCICDPTRAVRDVAQSFFKELNSRTDTIIQLLPEFLYHLSNGNERMSFKSYKTVFEFLIQLLKDKPKASADSMIDRVCIKFSNTDMNDSETPKYLLVALAKFVQNDGGLHRLQDNWRHWSKFMCHPSVAKEYRMMVEHMHSTSKNDEFKSQCVELIDNINKIESEGLRKEDVAIGSSITKNKGRAKKNPTTMSGSSRTTSRAANSRRRAPPPAQSDEDDSDSDDAPAAPRSAARRKAKKSAVADDDSDSDEFMLDD.

2 disordered regions span residues 1 to 43 (MPRK…DGLS) and 1421 to 1499 (ITKN…MLDD). The segment covering 1432–1446 (PTTMSGSSRTTSRAA) has biased composition (low complexity). Composition is skewed to acidic residues over residues 1458-1467 (SDEDDSDSDD) and 1486-1499 (ADDD…MLDD).

Belongs to the CND1 (condensin subunit 1) family. Component of the condensin I complex, which contains the mix-1/SMC2 and smc-4/SMC4 heterodimer, and three non SMC subunits that probably regulate the complex: dpy-26, capg-1 and dpy-28. Within the complex, interacts with dpy-26 and smc-4. Component of the dosage compensation complex, which consist of the condensin I like components mix-1/SMC2 and dpy-27/SMC4, and the three non SMC subunits dpy-26, capg-1 and dpy-28. Within the complex, interacts with mix-1, dpy-27, dpy-26 and capg-1. Interacts with smcl-1. Sumoylated. Sumoylated in the context of the dosage compensation complex but not in the condensin I complex. Sumoylation is important for assembly of the dosage compensation complex and its robust binding to the X chromosome. In terms of tissue distribution, expressed in somatic and germline tissues (at protein level).

It is found in the nucleus. It localises to the chromosome. Required for both chromosome condensation and segregation during mitosis and meiosis and X-chromosome dosage compensation depending on its binding partners. Regulatory subunit of the condensin I complex, a complex required for conversion of interphase chromatin into mitotic-like condense chromosomes. The condensin I complex probably introduces positive supercoils into relaxed DNA in the presence of type I topoisomerases and converts nicked DNA into positive knotted forms in the presence of type II topoisomerases. The condensin I complex function is required for proper chromosome segregation in mitosis and meiosis. As a member of the condensin I complex, further controls the crossover number and distribution in meiosis by restricting double strand break formation, possibly by influencing higher-order chromosome structure. Plays a role in robust cytokinesis upon presence of chromatin obstructions. Also a member of the condensin I-like dosage compensation complex that associates specifically with hermaphrodite X chromosomes to reduce their gene transcription during interphase, possibly through chromatin reorganization. The sequence is that of Condensin complex subunit 1 from Caenorhabditis elegans.